Reading from the N-terminus, the 558-residue chain is Laccase-4 (558 aa).

The signal sequence occupies residues 1-24; the sequence is MGSHMVWFLFLVSFFSVFPAPSES. Plastocyanin-like domains are found at residues 32–148 and 158–308; these read NVVM…PKRG and NEKV…YSGT. N-linked (GlcNAc...) asparagine glycans are attached at residues asparagine 37 and asparagine 78. Residues histidine 82 and histidine 84 each coordinate Cu cation. An N-linked (GlcNAc...) asparagine glycan is attached at asparagine 114. Residues histidine 127 and histidine 129 each coordinate Cu cation. N-linked (GlcNAc...) asparagine glycosylation is found at asparagine 187, asparagine 296, asparagine 323, asparagine 330, asparagine 373, asparagine 383, asparagine 400, asparagine 418, and asparagine 441. The Plastocyanin-like 3 domain maps to 408 to 542; it reads DFPKNPPHVF…KMAFLVENGK (135 aa). 3 residues coordinate Cu cation: histidine 459, histidine 462, and histidine 464. A glycan (N-linked (GlcNAc...) asparagine) is linked at asparagine 479. Cu cation contacts are provided by histidine 521, cysteine 522, histidine 523, and histidine 527. N-linked (GlcNAc...) asparagine glycosylation occurs at asparagine 545.

This sequence belongs to the multicopper oxidase family. The cofactor is Cu cation. Ubiquitous, with higher levels in the inflorescence stem.

The protein resides in the secreted. The protein localises to the extracellular space. It localises to the apoplast. The catalysed reaction is 4 hydroquinone + O2 = 4 benzosemiquinone + 2 H2O. Functionally, lignin degradation and detoxification of lignin-derived products. Required for secondary xylem cell wall lignification. The protein is Laccase-4 (IRX12) of Arabidopsis thaliana (Mouse-ear cress).